Here is a 965-residue protein sequence, read N- to C-terminus: Calsyntenin-2 (965 aa).

A signal peptide spans 1 to 20; the sequence is MLPGRLCLVPLLLALGVGSG. The Extracellular portion of the chain corresponds to 21-835; the sequence is GGSGDGGDSR…SIQRSSVVPS (815 aa). Cadherin domains lie at 46 to 162 and 163 to 282; these read IETS…APTF and KEPA…MPLF. Asn58 and Asn100 each carry an N-linked (GlcNAc...) asparagine glycan. N-linked (GlcNAc...) asparagine glycosylation is found at Asn344, Asn376, Asn720, and Asn733. A helical transmembrane segment spans residues 836–856; that stretch reads IATVVIIISVCMLVFVVAMGV. Residues 857-965 are Cytoplasmic-facing; the sequence is YRVRIAHQHF…NTAGVINIWK (109 aa). Positions 891–965 are disordered; the sequence is PMEKHEGPGH…NTAGVINIWK (75 aa). The segment covering 892–902 has biased composition (basic and acidic residues); that stretch reads MEKHEGPGHGE. Over residues 903–915 the composition is skewed to acidic residues; it reads DETEGEEEEEAEE. The segment covering 942 to 959 has biased composition (polar residues); that stretch reads QSGTSSQRPERSTWNTAG.

This sequence belongs to the calsyntenin family. In terms of processing, proteolytically processed under normal cellular conditions. A primary zeta-cleavage generates a large extracellular (soluble) N-terminal domain (sAlc) and a short C-terminal transmembrane fragment (CTF1). A secondary cleavage catalyzed by gamma-secretase within the transmembrane domain releases the beta-Alc-gamma chain in the extracellular milieu and produces an intracellular fragment (AlcICD). This processing is strongly suppressed in the tripartite complex formed with APBA2 and APP, which seems to prevent the association with PSEN1.

Its subcellular location is the postsynaptic cell membrane. It localises to the endoplasmic reticulum membrane. The protein localises to the golgi apparatus membrane. It is found in the cell projection. The protein resides in the dendrite. Its function is as follows. Postsynaptic adhesion molecule that binds to presynaptic neurexins to mediate synapse formation, and which is involved in learning and memory. Promotes synapse development by acting as a cell adhesion molecule at the postsynaptic membrane, which associates with neurexin-alpha at the presynaptic membrane. The protein is Calsyntenin-2 of Rattus norvegicus (Rat).